A 147-amino-acid polypeptide reads, in one-letter code: Molybdopterin synthase catalytic subunit 1 (147 aa).

Substrate is bound by residues asparagine 43–arginine 45, histidine 109–arginine 110, lysine 125, and lysine 132–glutamate 134.

Belongs to the MoaE family. In terms of assembly, heterotetramer of 2 MoaD subunits and 2 MoaE subunits. Also stable as homodimer. The enzyme changes between these two forms during catalysis.

The enzyme catalyses 2 [molybdopterin-synthase sulfur-carrier protein]-C-terminal-Gly-aminoethanethioate + cyclic pyranopterin phosphate + H2O = molybdopterin + 2 [molybdopterin-synthase sulfur-carrier protein]-C-terminal Gly-Gly + 2 H(+). Its pathway is cofactor biosynthesis; molybdopterin biosynthesis. Converts molybdopterin precursor Z into molybdopterin. This requires the incorporation of two sulfur atoms into precursor Z to generate a dithiolene group. The sulfur is provided by MoaD. This is Molybdopterin synthase catalytic subunit 1 (moaE1) from Mycobacterium tuberculosis (strain ATCC 25618 / H37Rv).